Consider the following 129-residue polypeptide: Ig lambda-1 chain V regions MOPC 104E/RPC20/J558/S104 (129 aa).

An N-terminal signal peptide occupies residues 1-19 (MAWISLILSLLALSSGAIS). At Gln20 the chain carries Pyrrolidone carboxylic acid. An Ig-like domain is found at 20 to 125 (QAVVTQESAL…HWVFGGGTKL (106 aa)).

The polypeptide is Ig lambda-1 chain V regions MOPC 104E/RPC20/J558/S104 (Mus musculus (Mouse)).